Consider the following 445-residue polypeptide: Histamine H3 receptor (445 aa).

Residues 1-40 (MERAPPDGLMNASGALAGEAAAAAGGARTFSAAWTAVLAA) lie on the Extracellular side of the membrane. Asn-11 carries an N-linked (GlcNAc...) asparagine glycan. The helical transmembrane segment at 41-61 (LMALLIVATVLGNALVMLAFV) threads the bilayer. Residues 62–71 (ADSSLRTQNN) are Cytoplasmic-facing. Residues 72-92 (FFLLNLAISDFLVGVFCIPLY) form a helical membrane-spanning segment. Topologically, residues 93–109 (VPYVLTGRWTFGRGLCK) are extracellular. Cysteines 108 and 189 form a disulfide. A helical transmembrane segment spans residues 110-130 (LWLVVDYLLCTSSVFNIVLIS). Residues 131 to 157 (YDRFLSVTRAVSYRAQQGDTRRAVRKM) are Cytoplasmic-facing. The chain crosses the membrane as a helical span at residues 158-178 (VLVWVLAFLLYGPAILSWEYL). The Extracellular segment spans residues 179-197 (SGGSSIPEGHCYAEFFYNW). Residues 198-218 (YFLITASTLEFFTPFLSVTFF) traverse the membrane as a helical segment. Over 219–359 (NLSIYLNIQR…LSRDKKVAKS (141 aa)) the chain is Cytoplasmic. Disordered regions lie at residues 236–264 (GGAR…WGCW) and 288–336 (AGEA…LEKR). Positions 299–312 (AAASPTSSSGSSSR) are enriched in low complexity. The chain crosses the membrane as a helical span at residues 360-380 (LAIIVSIFGLCWAPYTLLMII). The Extracellular segment spans residues 381 to 398 (RAACHGHCVPDYWYETSF). Residues 399–419 (WLLWANSAVNPVLYPLCHYSF) form a helical membrane-spanning segment. The Cytoplasmic segment spans residues 420 to 445 (RRAFTKLLCPQKLKVQPHSSLEHCWK). The residue at position 439 (Ser-439) is a Phosphoserine.

The protein belongs to the G-protein coupled receptor 1 family. As to expression, expressed widely and abundantly throughout the brain. Highly expressed in discrete neuronal populations such as pyramidal cells in cerebral cortex or cerebellar Purkinje cells.

Its subcellular location is the cell membrane. The H3 subclass of histamine receptors could mediate the histamine signals in CNS and peripheral nervous system. Signals through the inhibition of adenylate cyclase and displays high constitutive activity (spontaneous activity in the absence of agonist). The polypeptide is Histamine H3 receptor (HRH3) (Cavia porcellus (Guinea pig)).